Consider the following 556-residue polypeptide: PPE family protein PPE2 (556 aa).

Residues 8–164 (ASPPEVHSAL…ASYQAVSTAA (157 aa)) are PPE. Positions 201–256 (QKIGYTDFYNNVIQPFINWLTNLPFLQAMFSGFDPWLPSLGNPLTFLSPANIAFAL) are SH3-like. A leucine zipper motif region spans residues 319–340 (LEQTLALLPAALPLLAAPLAPL). 2 disordered regions span residues 385-418 (TPTP…PPVT) and 443-556 (GTGV…TRVE). Residues 400 to 417 (PTPPPGPPPPPVTAPPPV) show a composition bias toward pro residues. Over residues 456-471 (AEAPAAAAAPEEQVQP) the composition is skewed to low complexity. The segment covering 472–481 (QRRRRPKIKQ) has biased composition (basic residues). A Nuclear localization signal motif is present at residues 473–481 (RRRRPKIKQ).

It belongs to the mycobacterial PPE family.

It localises to the secreted. Its subcellular location is the host cytoplasm. It is found in the host nucleus. Inhibits nitric oxide (NO) production in activated macrophages. Acts by inhibiting expression of the host inducible nitric oxide synthase (iNOS). PPE2 is translocated into the host macrophage nucleus, where it interacts with a GATA-binding site overlapping with the TATA box of NOS2 (iNOS) promoter, and strongly inhibits NOS2 gene transcription. Reduction in NO production in turn facilitates intracellular survival of the bacilli inside the macrophage. In addition, disrupts the assembly of NADPH oxidase complex, which inhibits NADPH oxidase-mediated reactive oxygen species (ROS) generation in macrophages and favors M.tuberculosis survival. Acts by interacting with NCF2, the cytosolic subunit of NADPH oxidase, and preventing translocation of NCF2 and NCF1 to the membrane, which causes a reduction of the functional assembly of NADPH oxidase complex and a decrease in NADPH oxidase activity. This chain is PPE family protein PPE2 (PPE2), found in Mycobacterium tuberculosis (strain ATCC 25618 / H37Rv).